The chain runs to 616 residues: Chaperone protein HscA homolog (616 aa).

The protein belongs to the heat shock protein 70 family.

Its function is as follows. Chaperone involved in the maturation of iron-sulfur cluster-containing proteins. Has a low intrinsic ATPase activity which is markedly stimulated by HscB. In Vibrio atlanticus (strain LGP32) (Vibrio splendidus (strain Mel32)), this protein is Chaperone protein HscA homolog.